Here is a 621-residue protein sequence, read N- to C-terminus: Bifunctional protein GlmU (621 aa).

Positions 1–229 (MAERDLAVAI…AREIVGINDR (229 aa)) are pyrophosphorylase. Residues 11–14 (LAAG), Lys25, Gln76, and 81–82 (GT) contribute to the UDP-N-acetyl-alpha-D-glucosamine site. Asp106 serves as a coordination point for Mg(2+). UDP-N-acetyl-alpha-D-glucosamine-binding residues include Gly143, Glu158, Asn173, and Asn227. Asn227 contacts Mg(2+). Residues 230-250 (RQLAQAYQILQDRLKEAWMEA) are linker. Residues 251–621 (GVTFVDPDSV…TGVGIPSCPP (371 aa)) form an N-acetyltransferase region. 2 residues coordinate UDP-N-acetyl-alpha-D-glucosamine: Arg332 and Lys350. The Proton acceptor role is filled by His362. Tyr365 and Asn376 together coordinate UDP-N-acetyl-alpha-D-glucosamine. Acetyl-CoA contacts are provided by residues Ala379, 385-386 (NY), Ala422, and Arg441. Residues 601–621 (ATPPSPQRADGTGVGIPSCPP) form a disordered region.

The protein in the N-terminal section; belongs to the N-acetylglucosamine-1-phosphate uridyltransferase family. It in the C-terminal section; belongs to the transferase hexapeptide repeat family. In terms of assembly, homotrimer. Mg(2+) serves as cofactor.

It is found in the cytoplasm. The catalysed reaction is alpha-D-glucosamine 1-phosphate + acetyl-CoA = N-acetyl-alpha-D-glucosamine 1-phosphate + CoA + H(+). It carries out the reaction N-acetyl-alpha-D-glucosamine 1-phosphate + UTP + H(+) = UDP-N-acetyl-alpha-D-glucosamine + diphosphate. The protein operates within nucleotide-sugar biosynthesis; UDP-N-acetyl-alpha-D-glucosamine biosynthesis; N-acetyl-alpha-D-glucosamine 1-phosphate from alpha-D-glucosamine 6-phosphate (route II): step 2/2. It functions in the pathway nucleotide-sugar biosynthesis; UDP-N-acetyl-alpha-D-glucosamine biosynthesis; UDP-N-acetyl-alpha-D-glucosamine from N-acetyl-alpha-D-glucosamine 1-phosphate: step 1/1. It participates in bacterial outer membrane biogenesis; LPS lipid A biosynthesis. In terms of biological role, catalyzes the last two sequential reactions in the de novo biosynthetic pathway for UDP-N-acetylglucosamine (UDP-GlcNAc). The C-terminal domain catalyzes the transfer of acetyl group from acetyl coenzyme A to glucosamine-1-phosphate (GlcN-1-P) to produce N-acetylglucosamine-1-phosphate (GlcNAc-1-P), which is converted into UDP-GlcNAc by the transfer of uridine 5-monophosphate (from uridine 5-triphosphate), a reaction catalyzed by the N-terminal domain. This is Bifunctional protein GlmU from Synechococcus sp. (strain JA-3-3Ab) (Cyanobacteria bacterium Yellowstone A-Prime).